Here is a 431-residue protein sequence, read N- to C-terminus: MANSC domain-containing protein 1 (431 aa).

A signal peptide spans 1 to 26; sequence MFFGGEGSLTYTLVIICFLTLRLSAS. The Extracellular portion of the chain corresponds to 27–385; it reads QNCLKKSLED…QYGLPFEKWL (359 aa). Residues 33-117 enclose the MANSC domain; the sequence is SLEDVVIDIQ…LKPAKGLMSY (85 aa). Asparagine 72, asparagine 222, and asparagine 251 each carry an N-linked (GlcNAc...) asparagine glycan. Positions 234 to 277 are disordered; the sequence is SPHTTSATPKPATLLPTNASVTPSGTSQPQLATTAPPVTTVTSQ. The segment covering 248–261 has biased composition (polar residues); that stretch reads LPTNASVTPSGTSQ. Positions 262 to 277 are enriched in low complexity; it reads PQLATTAPPVTTVTSQ. N-linked (GlcNAc...) asparagine glycans are attached at residues asparagine 327 and asparagine 352. Positions 352 to 372 are disordered; that stretch reads NKTASWEGREASPGSSSQGSV. The helical transmembrane segment at 386-408 threads the bilayer; the sequence is LIGSLLFGVLFLVIGLVLLGRIL. Residues 409-431 lie on the Cytoplasmic side of the membrane; sequence SESLRRKRYSRLDYLINGIYVDI.

In terms of tissue distribution, widely expressed.

Its subcellular location is the membrane. The protein is MANSC domain-containing protein 1 (MANSC1) of Homo sapiens (Human).